The following is a 1420-amino-acid chain: PNVRWEYCNLTQCSDAEGTAVAPPNVTPVPSLEAPSEQAPTEQRPGVQECYHGNGQSYRGTYFTTVTGRTCQAWSSMTPHSHSRTPENYPNGGLIRNYCRNPDPVAAPYCYTMDPNVRWEYCNLTQCSDAEGIAVTPLTVTPVPSLEAPSKQAPTEQRPGVQECYHGNGQSYRGTYFTTVTGRTCQAWSSMTPHSHSRTPENYPNGGLIRNYCRNPDPVAAPYCYTMDPNVRWEYCNLTQCSDAEGTAVAPPNVTPVPSLEAPSEQAPTEQRSGVQECYHGNGQSYRGTYFTTVTGRTCQAWSSMKPHSHSRTPENYPNGGLIRNYCRNPDPVAAPYCYTMDPNVRWEYCNLTQCSDAEGTAVAPPNVTPVPSLEAPSEQAPTEQRLGVQECYHSNGQSYRGTYFTTVTGRTCQAWSSMTPHSHSRTPENYPNAGLVKNYCRNPDPVAAPWCYTTDPSVRWEYCNLTRCSDAEGTAVMPPNIIPVPSLEAFLEQEPTEETPGVQECYYHYGQSYRGTYSTTVTGRTCQAWSSMTPHQHSRTPKNYPNAGLTRNYCRNPDAEIRPWCYTMDPSVRWEYCNLTQCLVTESSVLETLTVVPDPSTQASSEEAPTEQSPEVQDCYHGDGQSYRGSFSTTVTGRTCQSWSSMTPHWHQRTTEYYPDGGLTRNYCRNPDAEIRPWCYTMDPSVRWEYCNLTQCPVTESSVLATSMAVSEQAPMEQSPGVQDCYHGDGQSYRGSFSTTVTGRICQSWSSMTPHWHQRTIEYYPNGGLTKNYCRNPDAEIRPWCYTMDPRVRWEYCNLTQCVVMESSVLATPMVVPVPSREVPSEEAPTENSPGVQDCYQGDGQSYRGTFSTTITGRTCQSWLSMTPHRHRRIPLRYPNAGLTRNYCRNRDAEIRPWCYTMDPSVRWEYCNLTQCPVTESSVLTTPTVVPVPSTEAPSEQAPPEKSPVVQDCYHGDGQSYRGTSSTTVTGRNCQSWSSMIPHWHQRTPENYPNAGLTRNYCRNPDSGKHPWCYTTDPCVRWEYCNLTQCSETESGVLETPTVVPVPSMEAHSEAAPTEQTPVVQQCYHGNGQSYRGTFSTTVTGRTCQSWSSMTPHQHKRTPENHPNDDLTMNYCRNPDADTGPWCFTMDPSVRREYCNLTRCSDTEGTVVTPPTVIPVPSLEAPSEQASSSFDCGKPQVEPKKCPGSIVGGCVAHPHSWPWQVSLRTRFGKHFCGGTLISPEWVLTAACCLETFSRPSFYKVILGAHQEVNLESHVQEIEVSRLFLEPIGADIALLKLSRPAIITDKVIPACLPSPNYVITAWTECYITGWGETQGTFGAGLLKEAQLHVIENTVCNHYEFLNGRVKSTELCAGHLAGGTDRCQGDNGGPVVCFDKDKYILRGITSWGPGCACPNKPGVYVRVSSFVTWIEGVMRNN.

Low complexity predominate over residues 19–30; it reads TAVAPPNVTPVP. The segment at 19 to 46 is disordered; sequence TAVAPPNVTPVPSLEAPSEQAPTEQRPG. Kringle domains are found at residues 49–127, 163–241, 277–355, 391–469, and 505–583; these read ECYH…LTQC, ECYH…LTRC, and ECYY…LTQC. Intrachain disulfides connect Cys-50–Cys-127, Cys-71–Cys-110, Cys-99–Cys-122, Cys-164–Cys-241, Cys-185–Cys-224, Cys-213–Cys-236, Cys-278–Cys-355, Cys-299–Cys-338, Cys-327–Cys-350, Cys-392–Cys-469, Cys-413–Cys-452, Cys-441–Cys-464, Cys-506–Cys-583, Cys-527–Cys-566, and Cys-555–Cys-578. Positions 598–617 are disordered; that stretch reads PDPSTQASSEEAPTEQSPEV. A compositionally biased stretch (polar residues) spans 600–616; sequence PSTQASSEEAPTEQSPE. 5 Kringle domains span residues 619 to 697, 725 to 803, 839 to 917, 953 to 1031, and 1067 to 1145; these read DCYH…LTQC, DCYQ…LTQC, and QCYH…LTRC. 19 disulfide bridges follow: Cys-620–Cys-697, Cys-641–Cys-680, Cys-669–Cys-692, Cys-726–Cys-803, Cys-747–Cys-786, Cys-775–Cys-798, Cys-840–Cys-917, Cys-861–Cys-900, Cys-889–Cys-912, Cys-954–Cys-1031, Cys-975–Cys-1014, Cys-1003–Cys-1026, Cys-1068–Cys-1145, Cys-1089–Cys-1128, Cys-1117–Cys-1140, Cys-1217–Cys-1233, Cys-1309–Cys-1376, Cys-1339–Cys-1355, and Cys-1366–Cys-1394. One can recognise a Peptidase S1 domain in the interval 1191–1418; that stretch reads IVGGCVAHPH…FVTWIEGVMR (228 aa).

It belongs to the peptidase S1 family. Plasminogen subfamily. In terms of assembly, disulfide-linked to apo-B100. Binds to fibronectin and decorin. N- and O-glycosylated.

Its function is as follows. Apo(a) is the main constituent of lipoprotein(a) (Lp(a)). It has serine proteinase activity and is able of autoproteolysis. Inhibits tissue-type plasminogen activator 1. Lp(a) may be a ligand for megalin/Gp 330. The polypeptide is Apolipoprotein(a) (LPA) (Macaca mulatta (Rhesus macaque)).